Consider the following 84-residue polypeptide: RNA-binding protein Hfq (84 aa).

The region spanning 10-69 is the Sm domain; it reads EPFLNTLRREHVPVSIYLVNGIKLQGQIESFDQYVVLLRNTVTQMVFKHAISTIVPGRAV.

This sequence belongs to the Hfq family. In terms of assembly, homohexamer.

Functionally, RNA chaperone that binds small regulatory RNA (sRNAs) and mRNAs to facilitate mRNA translational regulation in response to envelope stress, environmental stress and changes in metabolite concentrations. Also binds with high specificity to tRNAs. The chain is RNA-binding protein Hfq from Verminephrobacter eiseniae (strain EF01-2).